The following is a 263-amino-acid chain: MASPQLRGYGVQAIPVLLLLLLLLLLPLRVTPGTTCPPPVSIEHADIRVKNYSVNSRERYVCNSGFKRKAGTSTLIECVINKNTNVAHWTTPSLKCIRDPSLAHYSPVPTVVTPKVTSQPESPSPSAKEPEAFSPKSDTAMTTETAIMPGSRLTPSQTTSAGTTGTGSHKSSRAPSLAATMTLEPTASTSLRITEISPHSSKMTKVAISTSVLLVGAGVVMAFLAWYIKSRQPSQPCRVEVETMETVPMTVRASSKEDEDTGA.

The signal sequence occupies residues 1-32 (MASPQLRGYGVQAIPVLLLLLLLLLLPLRVTP). Topologically, residues 33–205 (GTTCPPPVSI…ISPHSSKMTK (173 aa)) are extracellular. Residues 34-98 (TTCPPPVSIE…WTTPSLKCIR (65 aa)) form the Sushi domain. Cystine bridges form between cysteine 36/cysteine 78 and cysteine 62/cysteine 96. N-linked (GlcNAc...) asparagine glycosylation occurs at asparagine 51. Low complexity predominate over residues 113–135 (TPKVTSQPESPSPSAKEPEAFSP). Residues 113 to 178 (TPKVTSQPES…HKSSRAPSLA (66 aa)) form a disordered region. The span at 136–145 (KSDTAMTTET) shows a compositional bias: polar residues. The segment covering 154–169 (TPSQTTSAGTTGTGSH) has biased composition (low complexity). The helical transmembrane segment at 206 to 226 (VAISTSVLLVGAGVVMAFLAW) threads the bilayer. Residues 227-263 (YIKSRQPSQPCRVEVETMETVPMTVRASSKEDEDTGA) lie on the Cytoplasmic side of the membrane.

In terms of assembly, the interleukin-15 receptor IL15R is a heterotrimer of IL15RA, IL2RB and IL2RG. IL15RA also self-associates. Interacts with SYK. In terms of processing, N-glycosylated and O-glycosylated. A soluble form (sIL-15RA) arises from proteolytic shedding of the membrane-anchored receptor. It also binds IL15 and thus interferes with IL15 binding to the membrane receptor. In terms of tissue distribution, widely expressed.

Its subcellular location is the membrane. It localises to the nucleus membrane. It is found in the cell surface. The protein localises to the secreted. The protein resides in the extracellular space. High-affinity receptor for interleukin-15. Can signal both in cis and trans where IL15R from one subset of cells presents IL15 to neighboring IL2RG-expressing cells. In neutrophils, binds and activates kinase SYK in response to IL15 stimulation. In neutrophils, required for IL15-induced phagocytosis in a SYK-dependent manner. The polypeptide is Interleukin-15 receptor subunit alpha (Il15ra) (Mus musculus (Mouse)).